Here is a 295-residue protein sequence, read N- to C-terminus: Elongation factor Ts (295 aa).

The involved in Mg(2+) ion dislocation from EF-Tu stretch occupies residues 79–82 (TDFV).

The protein belongs to the EF-Ts family.

The protein resides in the cytoplasm. Functionally, associates with the EF-Tu.GDP complex and induces the exchange of GDP to GTP. It remains bound to the aminoacyl-tRNA.EF-Tu.GTP complex up to the GTP hydrolysis stage on the ribosome. The chain is Elongation factor Ts from Bacillus cytotoxicus (strain DSM 22905 / CIP 110041 / 391-98 / NVH 391-98).